The following is a 684-amino-acid chain: Chaperone protein HtpG (684 aa).

An a; substrate-binding region spans residues 1-329 (MSKKGTIGVT…SPDIPLNVSR (329 aa)). The interval 330–548 (SYLQSDANVK…FMRRMRDMAQ (219 aa)) is b. Residues 549–684 (LQPGMSFYGE…EFIRRSQRLL (136 aa)) form a c region.

Belongs to the heat shock protein 90 family. In terms of assembly, homodimer.

The protein localises to the cytoplasm. In terms of biological role, molecular chaperone. Has ATPase activity. This is Chaperone protein HtpG from Porphyromonas gingivalis (strain ATCC 33277 / DSM 20709 / CIP 103683 / JCM 12257 / NCTC 11834 / 2561).